We begin with the raw amino-acid sequence, 714 residues long: Nucleolin (714 aa).

Residues 1–303 (MVKLAKAGKT…AKKQKVEGSE (303 aa)) form a disordered region. N6-acetyllysine occurs at positions 9, 15, and 16. Residues 24 to 42 (VEEDSEDEEMSEEEDDSSG) show a composition bias toward acidic residues. Phosphoserine occurs at positions 28, 34, 40, and 41. A compositionally biased stretch (low complexity) spans 55–106 (ATATPAKKVVVSQTKKVAVPTPAKKAAVTPGKKAAATPAKKAVTPAKAVATP). Repeat unit 1 spans residues 57–64 (ATPAKKVV). An 8 X 8 AA tandem repeats of X-T-P-X-K-K-X-X region spans residues 57 to 134 (ATPAKKVVVS…GAVTPAKGAK (78 aa)). Position 66 is a phosphoserine (Ser66). Residues Thr68, Thr75, Thr83, and Thr91 each carry the phosphothreonine modification. A run of 3 repeats spans residues 74 to 81 (PTPAKKAA), 82 to 89 (VTPGKKAA), and 90 to 97 (ATPAKKAV). Lys95 is subject to N6-acetyllysine. Thr98 bears the Phosphothreonine mark. The 5; truncated repeat unit spans residues 98–103 (TPAKAV). N6-acetyllysine is present on Lys101. Copy 6 of the repeat occupies 104–111 (ATPGKKGA). Phosphothreonine is present on Thr105. Lys108 carries the post-translational modification N6-acetyllysine. A Phosphothreonine modification is found at Thr112. Lys115 is subject to N6-acetyllysine. 2 tandem repeats follow at residues 119–126 (ATPGKKGA) and 127–134 (VTPAKGAK). A Phosphothreonine modification is found at Thr120. The residue at position 123 (Lys123) is an N6-acetyllysine. 2 positions are modified to phosphoserine: Ser144 and Ser157. Positions 144-170 (SDEDEDDDDDEDDSDEDEEDEEEDEFE) are enriched in acidic residues. Residues 171 to 187 (PPVVKGKQGKVAAAAPA) are compositionally biased toward low complexity. Ser188 bears the Phosphoserine mark. The span at 188 to 216 (SEDEDEEEDEEEEEEDEEEEDDSEEEEAM) shows a compositional bias: acidic residues. A Phosphothreonine modification is found at Thr219. Positions 240–272 (EEDDDDEEEDEDEEEDEEEEEDEEEEEEEEEEE) are enriched in acidic residues. Basic and acidic residues predominate over residues 285–301 (MTKQKEVPEAKKQKVEG). A Glycyl lysine isopeptide (Lys-Gly) (interchain with G-Cter in SUMO1); alternate cross-link involves residue Lys298. Residue Lys298 forms a Glycyl lysine isopeptide (Lys-Gly) (interchain with G-Cter in SUMO2); alternate linkage. At Ser302 the chain carries Phosphoserine. 2 RRM domains span residues 308–384 (FNLF…KPKG) and 394–467 (RTLL…YTGE). An N6-acetyllysine modification is found at Lys319. A Glycyl lysine isopeptide (Lys-Gly) (interchain with G-Cter in SUMO1); alternate cross-link involves residue Lys325. A Glycyl lysine isopeptide (Lys-Gly) (interchain with G-Cter in SUMO2); alternate cross-link involves residue Lys325. Residue Lys349 is modified to N6-acetyllysine. Ser357 carries the post-translational modification Phosphoserine. A Phosphothreonine modification is found at Thr368. A Glycyl lysine isopeptide (Lys-Gly) (interchain with G-Cter in SUMO2) cross-link involves residue Lys371. Lys378 participates in a covalent cross-link: Glycyl lysine isopeptide (Lys-Gly) (interchain with G-Cter in SUMO2); alternate. Lys378 is subject to N6-acetyllysine; alternate. Lys399 carries the N6-acetyllysine modification. A Phosphoserine modification is found at Ser402. Thr406 bears the Phosphothreonine mark. An N6-acetyllysine mark is found at Lys428 and Lys445. Ser459 and Ser461 each carry phosphoserine. N6-acetyllysine is present on residues Lys468 and Lys477. In terms of domain architecture, RRM 3 spans 486–560 (KTLVLSNLSY…RTIRLELQGP (75 aa)). Lys513 participates in a covalent cross-link: Glycyl lysine isopeptide (Lys-Gly) (interchain with G-Cter in SUMO2); alternate. Lys513 bears the N6-acetyllysine; alternate mark. Lys521 is modified (N6-acetyllysine). Ser563 is subject to Phosphoserine. Lys572 is modified (N6-acetyllysine). An RRM 4 domain is found at 572–647 (KTLFVKGLSE…NKVTLDWAKP (76 aa)). Lys577 participates in a covalent cross-link: Glycyl lysine isopeptide (Lys-Gly) (interchain with G-Cter in SUMO2); alternate. Lys577 is subject to N6-acetyllysine; alternate. Ser580 is subject to Phosphoserine. Lys589 is covalently cross-linked (Glycyl lysine isopeptide (Lys-Gly) (interchain with G-Cter in SUMO1); alternate). Lys589 is covalently cross-linked (Glycyl lysine isopeptide (Lys-Gly) (interchain with G-Cter in SUMO2); alternate). Phosphoserine occurs at positions 591 and 619. Residue Lys624 forms a Glycyl lysine isopeptide (Lys-Gly) (interchain with G-Cter in SUMO2) linkage. The tract at residues 642 to 714 (LDWAKPKGEG…KPQGKKTKFE (73 aa)) is disordered. Position 646 is an N6-acetyllysine (Lys646). Residues 650–703 (EGGFGGRGGGRGGFGGRGGGRGGGRGGFGGRGRGGFGGRGGFRGGRGGGGGGGD) show a composition bias toward gly residues. Asymmetric dimethylarginine occurs at positions 656, 660, 666, 670, 674, 680, 682, 688, and 692. Asymmetric dimethylarginine; alternate is present on Arg695. An Omega-N-methylarginine; alternate modification is found at Arg695.

In terms of assembly, identified in a IGF2BP1-dependent mRNP granule complex containing untranslated mRNAs. Component of the SWAP complex that consists of NPM1, NCL/nucleolin, PARP1 and SWAP70. Component of a complex which is at least composed of HTATSF1/Tat-SF1, the P-TEFb complex components CDK9 and CCNT1, RNA polymerase II, SUPT5H, and NCL/nucleolin. Interacts with AICDA. Interacts with APTX. Interacts with C1QBP. Interacts with ERBB4. Interacts (via C-terminus) with FMR1 isoform 6 (via N-terminus). Interacts with GZF1; this interaction is important for nucleolar localization of GZF1. Interacts with NSUN2. Interacts with NVL. Interacts (via N-terminus domain) with SETX. Interacts (via RRM1 and C-terminal RRM4/Arg/Gly-rich domains) with TERT; the interaction is important for nucleolar localization of TERT. Interacts with WDR46. Interacts with ZFP36. Interacts with LRRC34. Interacts with RRP1B. Interacts with HNRNPU; this interaction occurs during mitosis. Interacts with RIOK1; RIOK1 recruits NCL to PRMT5 for symmetrically methylation. Interacts with ZBTB7B. Interacts with MDK; this interaction promotes NCL clustering and lateral movements of this complex into lipid rafts leading to MDK internalization. Interacts with HDGF. Interacts with ALKBH2. Interacts with IGFBP5; this interaction is necessary for IGFBP5 localization to the nucleus. Interacts with DDX24 (when ubiquitinated); this interaction may be important during ribosome biogenesis. Post-translationally, some glutamate residues are glycylated by TTLL8. This modification occurs exclusively on glutamate residues and results in a glycine chain on the gamma-carboxyl group. In terms of processing, symmetrically methylated by PRMT5.

The protein resides in the nucleus. The protein localises to the nucleolus. Its subcellular location is the cytoplasm. Nucleolin is the major nucleolar protein of growing eukaryotic cells. It is found associated with intranucleolar chromatin and pre-ribosomal particles. It induces chromatin decondensation by binding to histone H1. It is thought to play a role in pre-rRNA transcription and ribosome assembly. May play a role in the process of transcriptional elongation. Binds RNA oligonucleotides with 5'-UUAGGG-3' repeats more tightly than the telomeric single-stranded DNA 5'-TTAGGG-3' repeats. The sequence is that of Nucleolin (NCL) from Mesocricetus auratus (Golden hamster).